The following is a 510-amino-acid chain: MKTKSTCAQNPNCSIMIFRPTKEEFNDFDKYIAYMESQGAHRAGLAKVIPPKEWRARQSYDNISNILIATPLQQVVSGQAGVFTQYHKKKKAMTVGQYRHLANSKKYQTPPHLDFEDLERKYWKNRLYESPIYGADVSGSLFDGKTQQWNVGHLGTIQDLLEQECGIVIEGVNTPYLYFGMWKTSFAWHTEDMDLYSINYLHFGQPKTWYAVPPEHGRRLELLAKELFPGSSQGCQAFLRHKVALISPTVLKENGIPFGRITQEAGEFMVTFPYGYHAGFNHGFNCAEAINFATPRWIDYGKVASQCSCGEARVSFSMDAFVRILQPERYEMWKRGQDQAVVDHTEAMGPTSQELTTWRVIQAPRKTWGLKHLRLRQVSRCLLPVATDSNIANNTQMCHTSRQAADSKGDEVQESDPAIAPPYPLGLSSPGHMSTGKRGLGRRPCELGVQESTNGAPVKRRLPEGRDDRSPSPELQSQSVTGDLIVNSDLVNPGPQHPVTASEGGLTSDP.

One can recognise a JmjN domain in the interval 15-57; the sequence is IMIFRPTKEEFNDFDKYIAYMESQGAHRAGLAKVIPPKEWRAR. Glutamate 23 and glutamate 24 each carry polyADP-ribosyl glutamic acid. Tyrosine 133 contributes to the 2-oxoglutarate binding site. Residues 143–309 form the JmjC domain; the sequence is DGKTQQWNVG…YGKVASQCSC (167 aa). 2 residues coordinate Fe cation: histidine 189 and glutamate 191. The 2-oxoglutarate site is built by asparagine 199 and lysine 207. The Zn(2+) site is built by cysteine 235 and histidine 241. Lysine 242 lines the 2-oxoglutarate pocket. Residue histidine 277 coordinates Fe cation. Zn(2+) contacts are provided by cysteine 307 and cysteine 309. Positions 397–510 are disordered; it reads MCHTSRQAAD…ASEGGLTSDP (114 aa). Basic and acidic residues predominate over residues 461–471; it reads RLPEGRDDRSP.

This sequence belongs to the JHDM3 histone demethylase family. The cofactor is Fe(2+). Ubiquitinated via 'Lys-63'-linked ubiquitin chains. Deubiquitinated by USP14 with the help of TRIM14 leading to stabilization.

The protein resides in the nucleus. It carries out the reaction N(6),N(6),N(6)-trimethyl-L-lysyl(9)-[histone H3] + 2 2-oxoglutarate + 2 O2 = N(6)-methyl-L-lysyl(9)-[histone H3] + 2 formaldehyde + 2 succinate + 2 CO2. Functionally, histone demethylase that specifically demethylates 'Lys-9' of histone H3, thereby playing a central role in histone code. Does not demethylate histone H3 'Lys-4', H3 'Lys-27', H3 'Lys-36' nor H4 'Lys-20'. Demethylates both di- and trimethylated H3 'Lys-9' residue, while it has no activity on monomethylated residues. Demethylation of Lys residue generates formaldehyde and succinate. The protein is Lysine-specific demethylase 4D (Kdm4d) of Rattus norvegicus (Rat).